A 526-amino-acid chain; its full sequence is Importin subunit alpha-1a (526 aa).

The 58-residue stretch at 1 to 58 folds into the IBB domain; it reads MSLRPSERVEVRRNRYKVAVDAEEGRRRREDNMVEIRKSRREESLLKKRREGLQAQAP. ARM repeat units lie at residues 105–145, 148–187, 190–230, 232–271, 274–313, 316–356, 359–398, and 402–441; these read SPPI…NIAS, SENTKVVIDHGAVPIFVKLLGSSSDDVREQAVWALGNVAG, PKCR…NFCR, KPQPSFEQTRPALPALARLIHSNDEEVLTDACWALSYLSD, NDKIQAVIEAGVCPRLVELLLHPSPSVLIPALRTVGNIVT, DAQT…NITA, KDQIQAVINAGIIGPLVNLLQTAEFDIKKEAAWAISNATS, and HDQIKYLVSEGCIKPLCDLLICPDIRIVTVCLEGLENILK.

This sequence belongs to the importin alpha family. As to quaternary structure, forms a complex with importin subunit beta-1. The whole complex, most stable and composed of importin alpha, importin beta and NLS substrate, is referred to as PTAC or pore targeting complex. Interacts with mungbean yellow mosaic virus capsid protein. In terms of tissue distribution, highly expressed in callus, followed by root and etiolated leaf. Low expression in green leaf.

The protein resides in the cytoplasm. The protein localises to the perinuclear region. Functions in nuclear protein import. Binds specifically and directly to substrates containing either a simple or bipartite NLS motif. Promotes docking of import substrates to the nuclear envelope. This Oryza sativa subsp. japonica (Rice) protein is Importin subunit alpha-1a.